Reading from the N-terminus, the 112-residue chain is Putative inner membrane protein YafU (112 aa).

Topologically, residues 1 to 21 are cytoplasmic; the sequence is MSSERDLVNFLGDFSMDVAKA. Residues 22 to 42 traverse the membrane as a helical segment; it reads VIAGGVATAIGSLASFACVSF. A topological domain (periplasmic) is located at residue Gly-43. Residues 44 to 64 form a helical membrane-spanning segment; the sequence is FPVILVGGAILLTGIVCTVVL. The Cytoplasmic segment spans residues 65–112; that stretch reads NEIDAQCHLSEKLKYAIRDGLKRQQELDKWKRENMTPFMYVLNTPPVI.

The protein resides in the cell inner membrane. In Escherichia coli (strain K12), this protein is Putative inner membrane protein YafU (yafU).